A 275-amino-acid polypeptide reads, in one-letter code: Reticulon-like protein B1 (275 aa).

2 stretches are compositionally biased toward basic and acidic residues: residues 1–10 (MAEEHKHDES) and 20–38 (VVER…HHGG). The segment at 1–68 (MAEEHKHDES…PSSPSSSMKS (68 aa)) is disordered. At A2 the chain carries N-acetylalanine. Residues 59–68 (PSSPSSSMKS) show a composition bias toward low complexity. The 186-residue stretch at 89-274 (PADIFMWKNK…PLGPLKNKKK (186 aa)) folds into the Reticulon domain. Transmembrane regions (helical) follow at residues 99–119 (KMSG…ELME), 120–140 (YHLL…LFLW), and 194–214 (FLIA…FNFL).

As to quaternary structure, interacts with VirB2. As to expression, predominantly expressed in root tissues.

The protein localises to the endoplasmic reticulum membrane. Its subcellular location is the cell membrane. In terms of biological role, plays a role in the Agrobacterium-mediated plant transformation via its interaction with VirB2, the major component of the T-pilus. The chain is Reticulon-like protein B1 (RTNLB1) from Arabidopsis thaliana (Mouse-ear cress).